A 428-amino-acid polypeptide reads, in one-letter code: Serine--tRNA ligase (428 aa).

231–233 (TAE) is an L-serine binding site. Position 262-264 (262-264 (RSE)) interacts with ATP. Glu285 contributes to the L-serine binding site. 349–352 (EISS) is an ATP binding site. Ser385 lines the L-serine pocket.

Belongs to the class-II aminoacyl-tRNA synthetase family. Type-1 seryl-tRNA synthetase subfamily. Homodimer. The tRNA molecule binds across the dimer.

The protein resides in the cytoplasm. It carries out the reaction tRNA(Ser) + L-serine + ATP = L-seryl-tRNA(Ser) + AMP + diphosphate + H(+). The catalysed reaction is tRNA(Sec) + L-serine + ATP = L-seryl-tRNA(Sec) + AMP + diphosphate + H(+). The protein operates within aminoacyl-tRNA biosynthesis; selenocysteinyl-tRNA(Sec) biosynthesis; L-seryl-tRNA(Sec) from L-serine and tRNA(Sec): step 1/1. Functionally, catalyzes the attachment of serine to tRNA(Ser). Is also able to aminoacylate tRNA(Sec) with serine, to form the misacylated tRNA L-seryl-tRNA(Sec), which will be further converted into selenocysteinyl-tRNA(Sec). In Cellvibrio japonicus (strain Ueda107) (Pseudomonas fluorescens subsp. cellulosa), this protein is Serine--tRNA ligase.